Reading from the N-terminus, the 351-residue chain is Phospho-N-acetylmuramoyl-pentapeptide-transferase (351 aa).

The next 10 helical transmembrane spans lie at 22-42, 65-85, 87-107, 128-148, 158-178, 190-210, 225-245, 254-274, 279-299, and 328-348; these read ILAF…FISW, TPTM…LITT, FNKY…LGFI, FLLQ…VGFD, YPIF…IVAM, GLAT…LYIV, LGVG…LGFL, VFMG…LAIV, LLLI…ILQV, and KITI…ILSI.

It belongs to the glycosyltransferase 4 family. MraY subfamily. It depends on Mg(2+) as a cofactor.

Its subcellular location is the cell inner membrane. The catalysed reaction is UDP-N-acetyl-alpha-D-muramoyl-L-alanyl-gamma-D-glutamyl-meso-2,6-diaminopimeloyl-D-alanyl-D-alanine + di-trans,octa-cis-undecaprenyl phosphate = di-trans,octa-cis-undecaprenyl diphospho-N-acetyl-alpha-D-muramoyl-L-alanyl-D-glutamyl-meso-2,6-diaminopimeloyl-D-alanyl-D-alanine + UMP. It participates in cell wall biogenesis; peptidoglycan biosynthesis. Catalyzes the initial step of the lipid cycle reactions in the biosynthesis of the cell wall peptidoglycan: transfers peptidoglycan precursor phospho-MurNAc-pentapeptide from UDP-MurNAc-pentapeptide onto the lipid carrier undecaprenyl phosphate, yielding undecaprenyl-pyrophosphoryl-MurNAc-pentapeptide, known as lipid I. This chain is Phospho-N-acetylmuramoyl-pentapeptide-transferase, found in Nautilia profundicola (strain ATCC BAA-1463 / DSM 18972 / AmH).